Here is a 191-residue protein sequence, read N- to C-terminus: UPF0669 protein C6orf120 homolog (191 aa).

Positions 1 to 30 are cleaved as a signal peptide; the sequence is MAAPRGRAAPWTTALLLLLTSQILSPGSCA. Asparagine 53 carries N-linked (GlcNAc...) asparagine glycosylation.

The protein belongs to the UPF0669 family.

Its subcellular location is the secreted. May be involved in induction of apoptosis in CD4(+) T-cells, but not CD8(+) T-cells or hepatocytes. This chain is UPF0669 protein C6orf120 homolog, found in Macaca fascicularis (Crab-eating macaque).